The primary structure comprises 373 residues: Putative citrate synthase 2 (373 aa).

Active-site residues include His250 and Glu303.

Belongs to the citrate synthase family.

The enzyme catalyses oxaloacetate + acetyl-CoA + H2O = citrate + CoA + H(+). Its pathway is carbohydrate metabolism; tricarboxylic acid cycle; isocitrate from oxaloacetate: step 1/2. The polypeptide is Putative citrate synthase 2 (citA) (Mycobacterium bovis (strain ATCC BAA-935 / AF2122/97)).